The primary structure comprises 487 residues: Chromosomal replication initiator protein DnaA (487 aa).

A domain I, interacts with DnaA modulators region spans residues 1 to 79; sequence MEKSKNIWSL…GYNNIVIVFT (79 aa). The domain II stretch occupies residues 79–142; that stretch reads TNQPPKTHSN…EEEPTNFKNP (64 aa). The interval 143–359 is domain III, AAA+ region; it reads FLKKRYTFEN…AAVTKLKAYI (217 aa). ATP contacts are provided by Gly187, Gly189, Lys190, and Thr191. The segment at 360–487 is domain IV, binds dsDNA; that stretch reads DLDNIEIDIE…TELMNKIKKN (128 aa).

It belongs to the DnaA family. As to quaternary structure, oligomerizes as a right-handed, spiral filament on DNA at oriC.

The protein localises to the cytoplasm. Its function is as follows. Plays an essential role in the initiation and regulation of chromosomal replication. ATP-DnaA binds to the origin of replication (oriC) to initiate formation of the DNA replication initiation complex once per cell cycle. Binds the DnaA box (a 9 base pair repeat at the origin) and separates the double-stranded (ds)DNA. Forms a right-handed helical filament on oriC DNA; dsDNA binds to the exterior of the filament while single-stranded (ss)DNA is stabiized in the filament's interior. The ATP-DnaA-oriC complex binds and stabilizes one strand of the AT-rich DNA unwinding element (DUE), permitting loading of DNA polymerase. After initiation quickly degrades to an ADP-DnaA complex that is not apt for DNA replication. Binds acidic phospholipids. The protein is Chromosomal replication initiator protein DnaA of Borreliella burgdorferi (strain ZS7) (Borrelia burgdorferi).